Consider the following 556-residue polypeptide: 2-succinyl-5-enolpyruvyl-6-hydroxy-3-cyclohexene-1-carboxylate synthase (556 aa).

This sequence belongs to the TPP enzyme family. MenD subfamily. In terms of assembly, homodimer. Requires Mg(2+) as cofactor. Mn(2+) serves as cofactor. Thiamine diphosphate is required as a cofactor.

The catalysed reaction is isochorismate + 2-oxoglutarate + H(+) = 5-enolpyruvoyl-6-hydroxy-2-succinyl-cyclohex-3-ene-1-carboxylate + CO2. It functions in the pathway quinol/quinone metabolism; 1,4-dihydroxy-2-naphthoate biosynthesis; 1,4-dihydroxy-2-naphthoate from chorismate: step 2/7. Its pathway is quinol/quinone metabolism; menaquinone biosynthesis. Catalyzes the thiamine diphosphate-dependent decarboxylation of 2-oxoglutarate and the subsequent addition of the resulting succinic semialdehyde-thiamine pyrophosphate anion to isochorismate to yield 2-succinyl-5-enolpyruvyl-6-hydroxy-3-cyclohexene-1-carboxylate (SEPHCHC). The chain is 2-succinyl-5-enolpyruvyl-6-hydroxy-3-cyclohexene-1-carboxylate synthase from Escherichia coli O45:K1 (strain S88 / ExPEC).